Reading from the N-terminus, the 207-residue chain is Ras-related protein Rab7 (207 aa).

GTP-binding positions include 15 to 22, 34 to 40, 63 to 67, 125 to 128, and 156 to 157; these read GDSSVGKT, SNQYKAT, DTAGQ, NKVD, and AK. An Effector region motif is present at residues 37-45; that stretch reads YKATIGADF. 2 S-geranylgeranyl cysteine lipidation sites follow: cysteine 205 and cysteine 207.

It belongs to the small GTPase superfamily. Rab family. Expressed in eye (at protein level).

Its subcellular location is the early endosome membrane. The protein localises to the late endosome membrane. It is found in the lysosome membrane. It localises to the cytoplasmic vesicle. The protein resides in the autophagosome membrane. Its subcellular location is the autolysosome membrane. The protein localises to the presynapse. It is found in the perikaryon. The enzyme catalyses GTP + H2O = GDP + phosphate + H(+). In terms of biological role, small GTPase which cycles between active GTP-bound and inactive GDP-bound states. In its active state, binds to a variety of effector proteins playing a key role in the regulation of endo-lysosomal trafficking. Involved in microtubule minus and plus end-directed endosomal migration and positioning, and endosome-lysosome transport through different protein-protein interaction cascades. Governs early-to-late endosomal to lysosomal maturation. Controls endocytic cargo sorting towards the late endosome facilitating its eventual endolysosomal-mediated degradation. Together with Rab2 involved in promoting fusion of autophagosomes and endosomes with lysosomes probably through recruitment of the HOPS tethering complex. Involved in biosynthetic transport to lysosomes. Involved in establishing morphogen concentration gradients, for example of the TGF-beta homolog dpp/decapentaplegic, during pattern formation and organogenesis. Together with the Mon1-Ccz1 complex, required for autolysosome formation in fat cells and autophagic degradation during starvation-induced basal and developmental autophagy. Together with Mon1, regulates levels of postsynaptic glutamate receptor GluRIIA in the neuromuscular junction (NMJ) presynapse. Required for autophagocytosis-dependent remodeling of myofibrils and transverse-tubules (T-tubules) during metamorphosis. Involved in intracellular trafficking of the carbohydrate transporter Tret1 in glial cells of the blood brain barrier, influencing its subcellular localization and protein levels. The protein is Ras-related protein Rab7 of Drosophila melanogaster (Fruit fly).